A 507-amino-acid polypeptide reads, in one-letter code: Probable cytochrome P450 6a18 (507 aa).

Cys451 contacts heme.

It belongs to the cytochrome P450 family. It depends on heme as a cofactor.

The protein localises to the endoplasmic reticulum membrane. It localises to the microsome membrane. May be involved in the metabolism of insect hormones and in the breakdown of synthetic insecticides. This chain is Probable cytochrome P450 6a18 (Cyp6a18), found in Drosophila melanogaster (Fruit fly).